The chain runs to 137 residues: Large ribosomal subunit protein uL16 (137 aa).

Belongs to the universal ribosomal protein uL16 family. Part of the 50S ribosomal subunit.

Functionally, binds 23S rRNA and is also seen to make contacts with the A and possibly P site tRNAs. This Rhizobium rhizogenes (strain K84 / ATCC BAA-868) (Agrobacterium radiobacter) protein is Large ribosomal subunit protein uL16.